A 182-amino-acid polypeptide reads, in one-letter code: Translation initiation factor IF-3 (182 aa).

The interval 1–22 is disordered; sequence MPLGDCNISTPDNKQNRKNQEI.

The protein belongs to the IF-3 family. As to quaternary structure, monomer.

The protein resides in the cytoplasm. In terms of biological role, IF-3 binds to the 30S ribosomal subunit and shifts the equilibrium between 70S ribosomes and their 50S and 30S subunits in favor of the free subunits, thus enhancing the availability of 30S subunits on which protein synthesis initiation begins. The chain is Translation initiation factor IF-3 from Xanthomonas axonopodis pv. citri (strain 306).